Consider the following 630-residue polypeptide: Pro-interleukin-16 (630 aa).

Disordered regions lie at residues 30-268 and 316-343; these read ENPG…FPLT and PKEGASPTSSSNEDSAANGSAETSASDT. Low complexity predominate over residues 129 to 143; it reads IRASSSSSIKQRISS. Ser-220 carries the phosphoserine modification. The span at 321-343 shows a compositional bias: polar residues; the sequence is SPTSSSNEDSAANGSAETSASDT. The segment at 404–500 is interaction with PPP1R12A, PPP1R12B and PPP1R12C; sequence KQLDSIHVTI…IVTRKLTAES (97 aa). 2 PDZ domains span residues 410-495 and 532-617; these read HVTI…VTRK and TVTL…IRRK.

As to quaternary structure, homotetramer. Pro-interleukin-16 interacts (via PDZ 2 domain) with PPP1R12A, PPP1R12B and PPP1R12C. Pro-interleukin-16 interacts with GRIN2A. Pro-interleukin-16 interacts with GABPB1. Pro-interleukin-16 interacts (via PDZ 3 domain) with HDAC3.

Its subcellular location is the secreted. The protein resides in the cytoplasm. It localises to the nucleus. Interleukin-16 stimulates a migratory response in CD4+ lymphocytes, monocytes, and eosinophils. Primes CD4+ T-cells for IL-2 and IL-15 responsiveness. Also induces T-lymphocyte expression of interleukin 2 receptor. Ligand for CD4. In terms of biological role, pro-interleukin-16 is involved in cell cycle progression in T-cells. Appears to be involved in transcriptional regulation of SKP2 and is probably part of a transcriptional repression complex on the core promoter of the SKP2 gene. May act as a scaffold for GABPB1 (the DNA-binding subunit the GABP transcription factor complex) and HDAC3 thus maintaining transcriptional repression and blocking cell cycle progression in resting T-cells. The protein is Pro-interleukin-16 (IL16) of Macaca mulatta (Rhesus macaque).